The chain runs to 474 residues: Protein Rv3254 (474 aa).

The propeptide occupies 1-4; the sequence is MTGR.

In Mycobacterium tuberculosis (strain ATCC 25618 / H37Rv), this protein is Protein Rv3254.